The sequence spans 233 residues: Large ribosomal subunit protein eL6y (233 aa).

Basic and acidic residues predominate over residues 48–72; sequence HDAKSKVDAPVEKPPKFYPAEDVKK. Residues 48–82 form a disordered region; that stretch reads HDAKSKVDAPVEKPPKFYPAEDVKKPLPNRRTAKP.

Belongs to the eukaryotic ribosomal protein eL6 family.

In Arabidopsis thaliana (Mouse-ear cress), this protein is Large ribosomal subunit protein eL6y (RPL6B).